The primary structure comprises 39 residues: Photosystem II reaction center protein J (39 aa).

Residues 7–27 (IPLWLVATVAGMGVITLLGIF) form a helical membrane-spanning segment.

It belongs to the PsbJ family. PSII is composed of 1 copy each of membrane proteins PsbA, PsbB, PsbC, PsbD, PsbE, PsbF, PsbH, PsbI, PsbJ, PsbK, PsbL, PsbM, PsbT, PsbX, PsbY, PsbZ, Psb30/Ycf12, peripheral proteins PsbO, CyanoQ (PsbQ), PsbU, PsbV and a large number of cofactors. It forms dimeric complexes.

The protein resides in the cellular thylakoid membrane. Its function is as follows. One of the components of the core complex of photosystem II (PSII). PSII is a light-driven water:plastoquinone oxidoreductase that uses light energy to abstract electrons from H(2)O, generating O(2) and a proton gradient subsequently used for ATP formation. It consists of a core antenna complex that captures photons, and an electron transfer chain that converts photonic excitation into a charge separation. The chain is Photosystem II reaction center protein J from Cyanothece sp. (strain PCC 7425 / ATCC 29141).